Reading from the N-terminus, the 196-residue chain is Neuropeptide prohormone-4 (196 aa).

Positions 1–25 are cleaved as a signal peptide; it reads MSSPLRMDVTFLLAAIAVTWVCGLK. One can recognise an LDL-receptor class A domain in the interval 50–90; the sequence is DCDIASPFKCEESPTCLRLFQVCNGRWDCEHGSDEDNALCA. 3 disulfides stabilise this stretch: Cys51–Cys65, Cys59–Cys78, and Cys72–Cys89.

In terms of tissue distribution, expressed by the venom duct.

The protein resides in the secreted. The sequence is that of Neuropeptide prohormone-4 from Conus victoriae (Queen Victoria cone).